Here is a 213-residue protein sequence, read N- to C-terminus: Lactobacillus shifted protein (213 aa).

A compositionally biased stretch (polar residues) spans 28 to 38 (PRFTENAMQPN). Disordered regions lie at residues 28-56 (PRFT…DATP) and 182-213 (PTSS…YEQR).

The sequence is that of Lactobacillus shifted protein (lbsA) from Emericella nidulans (strain FGSC A4 / ATCC 38163 / CBS 112.46 / NRRL 194 / M139) (Aspergillus nidulans).